We begin with the raw amino-acid sequence, 153 residues long: Profilin (153 aa).

Belongs to the profilin family. Occurs in many kinds of cells as a complex with monomeric actin in a 1:1 ratio.

It localises to the cytoplasm. Its subcellular location is the cytoskeleton. Binds to actin and affects the structure of the cytoskeleton. At high concentrations, profilin prevents the polymerization of actin, whereas it enhances it at low concentrations. By binding to PIP2, it inhibits the formation of IP3 and DG. This chain is Profilin, found in Tetrahymena pyriformis.